A 35-amino-acid chain; its full sequence is Photosystem II reaction center protein T (35 aa).

Residues 3–23 (AFAYTLLMTLVVATLFFAVAF) form a helical membrane-spanning segment.

It belongs to the PsbT family. As to quaternary structure, PSII is composed of 1 copy each of membrane proteins PsbA, PsbB, PsbC, PsbD, PsbE, PsbF, PsbH, PsbI, PsbJ, PsbK, PsbL, PsbM, PsbT, PsbX, PsbY, Psb30/Ycf12, peripheral proteins PsbO, CyanoQ (PsbQ), PsbU, PsbV and a large number of cofactors. It forms dimeric complexes.

The protein localises to the cellular thylakoid membrane. Found at the monomer-monomer interface of the photosystem II (PS II) dimer, plays a role in assembly and dimerization of PSII. PSII is a light-driven water plastoquinone oxidoreductase, using light energy to abstract electrons from H(2)O, generating a proton gradient subsequently used for ATP formation. The protein is Photosystem II reaction center protein T of Prochlorococcus marinus (strain MIT 9303).